A 156-amino-acid chain; its full sequence is tRNA-specific adenosine deaminase (156 aa).

One can recognise a CMP/dCMP-type deaminase domain in the interval 2-120; that stretch reads TNDIYFMTLA…GSLMNLLQQS (119 aa). His53 contacts Zn(2+). Residue Glu55 is the Proton donor of the active site. 2 residues coordinate Zn(2+): Cys83 and Cys86.

The protein belongs to the cytidine and deoxycytidylate deaminase family. In terms of assembly, homodimer. Zn(2+) is required as a cofactor.

The enzyme catalyses adenosine(34) in tRNA + H2O + H(+) = inosine(34) in tRNA + NH4(+). Its function is as follows. Catalyzes the deamination of adenosine to inosine at the wobble position 34 of tRNA(Arg2). The chain is tRNA-specific adenosine deaminase from Staphylococcus aureus (strain Mu50 / ATCC 700699).